A 566-amino-acid chain; its full sequence is Unconventional myosin-VIIa (566 aa).

Residues 67–566 enclose the Myosin motor domain; that stretch reads MMEDMIQHLG…AGVVYYESQG (500 aa). 160 to 167 lines the ATP pocket; it reads GESGAGKT.

Belongs to the TRAFAC class myosin-kinesin ATPase superfamily. Myosin family. In terms of assembly, might homodimerize in a two headed molecule through the formation of a coiled-coil rod. Identified in a complex with USH1C and USH1G. Interacts with MYRIP. Interacts with RPE65. Interacts with CIB2. May interact with CALM. Interacts with WHRN. Interacts with PLEKHB1 (via PH domain). Interacts with PCDH15. Interacts with TWF2. Interacts with USH1G. Interacts with MYH9. Interacts (via MyTH4-FERM domains) with cytoplasmic regions of ADGRV1 and USH2A. Interacts with PDZD7 (via MyTH4-FERM domains). Interacts with CALML4.

It localises to the cytoplasm. It is found in the cell cortex. The protein resides in the cytoskeleton. The protein localises to the synapse. Its function is as follows. Myosins are actin-based motor molecules with ATPase activity. Unconventional myosins serve in intracellular movements. Their highly divergent tails bind to membranous compartments, which are then moved relative to actin filaments. In the retina, plays an important role in the renewal of the outer photoreceptor disks. Plays an important role in the distribution and migration of retinal pigment epithelial (RPE) melanosomes and phagosomes, and in the regulation of opsin transport in retinal photoreceptors. In the inner ear, plays an important role in differentiation, morphogenesis and organization of cochlear hair cell bundles. Motor protein that is a part of the functional network formed by USH1C, USH1G, CDH23 and MYO7A that mediates mechanotransduction in cochlear hair cells. Required for normal hearing. Involved in hair-cell vesicle trafficking of aminoglycosides, which are known to induce ototoxicity. This chain is Unconventional myosin-VIIa (MYO7A), found in Sus scrofa (Pig).